The chain runs to 314 residues: Porphobilinogen deaminase (314 aa).

Residue cysteine 249 is modified to S-(dipyrrolylmethanemethyl)cysteine.

This sequence belongs to the HMBS family. Monomer. Dipyrromethane is required as a cofactor.

It catalyses the reaction 4 porphobilinogen + H2O = hydroxymethylbilane + 4 NH4(+). It functions in the pathway porphyrin-containing compound metabolism; protoporphyrin-IX biosynthesis; coproporphyrinogen-III from 5-aminolevulinate: step 2/4. Tetrapolymerization of the monopyrrole PBG into the hydroxymethylbilane pre-uroporphyrinogen in several discrete steps. The sequence is that of Porphobilinogen deaminase from Brucella anthropi (strain ATCC 49188 / DSM 6882 / CCUG 24695 / JCM 21032 / LMG 3331 / NBRC 15819 / NCTC 12168 / Alc 37) (Ochrobactrum anthropi).